Consider the following 217-residue polypeptide: Urease accessory protein UreG (217 aa).

Residues 1 to 18 (MNAPHHPAHSTVRTKKLP) show a composition bias toward basic residues. The segment at 1 to 24 (MNAPHHPAHSTVRTKKLPPLRVGV) is disordered. 26–33 (GPVGSGKT) lines the GTP pocket.

This sequence belongs to the SIMIBI class G3E GTPase family. UreG subfamily. Homodimer. UreD, UreF and UreG form a complex that acts as a GTP-hydrolysis-dependent molecular chaperone, activating the urease apoprotein by helping to assemble the nickel containing metallocenter of UreC. The UreE protein probably delivers the nickel.

It localises to the cytoplasm. Facilitates the functional incorporation of the urease nickel metallocenter. This process requires GTP hydrolysis, probably effectuated by UreG. In Paraburkholderia xenovorans (strain LB400), this protein is Urease accessory protein UreG.